A 380-amino-acid polypeptide reads, in one-letter code: O-phospho-L-seryl-tRNA:Cys-tRNA synthase (380 aa).

Pyridoxal 5'-phosphate is bound by residues 86–87 (AR), Asn-192, and 215–217 (SGH). Lys-218 bears the N6-(pyridoxal phosphate)lysine mark.

This sequence belongs to the SepCysS family. Homodimer. Interacts with SepRS. Requires pyridoxal 5'-phosphate as cofactor.

It carries out the reaction O-phospho-L-seryl-tRNA(Cys) + hydrogen sulfide + H(+) = L-cysteinyl-tRNA(Cys) + phosphate. Its function is as follows. Converts O-phospho-L-seryl-tRNA(Cys) (Sep-tRNA(Cys)) to L-cysteinyl-tRNA(Cys) (Cys-tRNA(Cys)). In Methanococcus maripaludis (strain C5 / ATCC BAA-1333), this protein is O-phospho-L-seryl-tRNA:Cys-tRNA synthase.